The chain runs to 172 residues: Cytidylate kinase (172 aa).

7–15 (GLAGTGTTT) contacts ATP.

The protein belongs to the cytidylate kinase family. Type 2 subfamily.

The protein resides in the cytoplasm. The enzyme catalyses CMP + ATP = CDP + ADP. It catalyses the reaction dCMP + ATP = dCDP + ADP. This is Cytidylate kinase from Methanobrevibacter smithii (strain ATCC 35061 / DSM 861 / OCM 144 / PS).